The sequence spans 2988 residues: NBPF family member NBPF14 (2988 aa).

A coiled-coil region spans residues 75–119 (RQFKEEKLAEQLKQAEELRQYKVLVHSQERELTQLREKLREGRDA). 3 disordered regions span residues 161 to 200 (KLSPENDEDEDEDVQVEEAEKVLESSAPREVQKAEESKVP), 451 to 474 (EKVQKSSAPREMQKAEEKEVPEDS), and 520 to 566 (WEDA…EGYS). Positions 165 to 177 (ENDEDEDEDVQVE) are enriched in acidic residues. Olduvai domains are found at residues 165–259 (ENDE…NILP), 436–528 (ENDN…HIIP), 529–600 (ENES…VDIG), 601–692 (RHRW…PSCP), 695–750 (SREL…LDVD), 751–843 (RIKK…RSKK), 844–919 (ERRR…LDVD), 920–1012 (RIKK…RSKK), 1013–1105 (ERRR…PSCP), 1108–1163 (SREL…LDVD), 1164–1256 (RIKK…RSKK), 1257–1349 (ERRR…PSCP), 1352–1407 (SREL…LDVD), 1408–1500 (RIKK…RSKK), 1501–1593 (ERRR…PSCP), 1596–1651 (SREL…LDVD), 1652–1744 (RFKK…RSKK), 1745–1837 (ERRR…PSCP), 1840–1895 (SREL…LDVD), 1896–1988 (RIKK…RSKK), 1989–2081 (ERRR…PSCP), 2084–2139 (SREL…LDVD), 2140–2232 (RIKK…RSKK), 2233–2325 (ERRR…PSCP), 2328–2383 (SREL…LDVD), 2384–2476 (RIKK…RSKK), 2477–2569 (ERRR…PSCP), 2572–2627 (SREL…LDVD), 2628–2720 (RIKK…RSKK), 2721–2813 (ERRR…PSCP), 2816–2889 (SREL…RSKK), and 2890–2988 (ERRR…IFPQ). The segment covering 190–200 (EVQKAEESKVP) has biased composition (basic and acidic residues). Composition is skewed to acidic residues over residues 530 to 539 (NESDDEEEEE) and 550 to 562 (ESEEEEVPQESWD). 3 disordered regions span residues 754–773 (KDEEEEEDQDPPCPRLSREL), 828–871 (EKKG…LDEK), and 999–1038 (KGKGKKRRGRRSKKERRRGRKEGEEDQNPPCPRLSRELLD). Basic residues-rich tracts occupy residues 831 to 849 (GKGKKRRGRRSKKERRRGR) and 1000 to 1018 (GKGKKRRGRRSKKERRRGR). Positions 1243 to 1282 (KGKGKKRRGRRSKKERRRGRKEGEEDQNPPCPRLSRELLD) are disordered. Residues 1244–1262 (GKGKKRRGRRSKKERRRGR) are compositionally biased toward basic residues. The disordered stretch occupies residues 1487–1521 (KGKGKKRRGRRSKKERRRGRKEGEEDQNPPCPRLS). Residues 1488-1506 (GKGKKRRGRRSKKERRRGR) show a composition bias toward basic residues. Positions 1731-1770 (KGKGKKRRGRRSKKERRRGRKEGEEDQNPPCPRLSRELLD) are disordered. Positions 1732-1750 (GKGKKRRGRRSKKERRRGR) are enriched in basic residues. Positions 1975-2014 (KGKGKKRRGRRSKKERRRGRKEGEEDQNPPCPRLSRELLD) are disordered. Residues 1976 to 1994 (GKGKKRRGRRSKKERRRGR) are compositionally biased toward basic residues. Residues 2219–2258 (KGKGKKRRGRRSKKERRRGRKEGEEDQNPPCPRLSRELLD) form a disordered region. Over residues 2220–2238 (GKGKKRRGRRSKKERRRGR) the composition is skewed to basic residues. The interval 2463-2502 (KGKGKKRRGRRSKKERRRGRKEGEEDQNPPCPRLSRELLD) is disordered. Residues 2464–2482 (GKGKKRRGRRSKKERRRGR) show a composition bias toward basic residues. Disordered stretches follow at residues 2707 to 2745 (KGKGKKRRGRRSKKERRRGRKEGEEDQNPPCPRLSRELL) and 2877 to 2909 (GKGKKRRGRRSKKERRRGRKEGEEDQNPPCPRL). Basic residues-rich tracts occupy residues 2708-2726 (GKGKKRRGRRSKKERRRGR) and 2877-2895 (GKGKKRRGRRSKKERRRGR).

This sequence belongs to the NBPF family. As to expression, expressed in spleen and fetal liver.

It is found in the cytoplasm. This chain is NBPF family member NBPF14, found in Homo sapiens (Human).